Consider the following 286-residue polypeptide: Pantothenate synthetase (286 aa).

Residue 30–37 (MGNLHSGH) coordinates ATP. His37 acts as the Proton donor in catalysis. Gln61 serves as a coordination point for (R)-pantoate. Gln61 is a binding site for beta-alanine. Position 149–152 (149–152 (GQKD)) interacts with ATP. A (R)-pantoate-binding site is contributed by Gln155. ATP contacts are provided by residues Val178 and 186–189 (LSSR).

Belongs to the pantothenate synthetase family. As to quaternary structure, homodimer.

It localises to the cytoplasm. It carries out the reaction (R)-pantoate + beta-alanine + ATP = (R)-pantothenate + AMP + diphosphate + H(+). It participates in cofactor biosynthesis; (R)-pantothenate biosynthesis; (R)-pantothenate from (R)-pantoate and beta-alanine: step 1/1. Catalyzes the condensation of pantoate with beta-alanine in an ATP-dependent reaction via a pantoyl-adenylate intermediate. The protein is Pantothenate synthetase of Pseudomonas fluorescens (strain Pf0-1).